A 275-amino-acid polypeptide reads, in one-letter code: 2,3,4,5-tetrahydropyridine-2,6-dicarboxylate N-succinyltransferase (275 aa).

It belongs to the transferase hexapeptide repeat family.

The protein localises to the cytoplasm. It catalyses the reaction (S)-2,3,4,5-tetrahydrodipicolinate + succinyl-CoA + H2O = (S)-2-succinylamino-6-oxoheptanedioate + CoA. It functions in the pathway amino-acid biosynthesis; L-lysine biosynthesis via DAP pathway; LL-2,6-diaminopimelate from (S)-tetrahydrodipicolinate (succinylase route): step 1/3. The polypeptide is 2,3,4,5-tetrahydropyridine-2,6-dicarboxylate N-succinyltransferase (Burkholderia multivorans (strain ATCC 17616 / 249)).